Reading from the N-terminus, the 140-residue chain is uncharacterized protein (140 aa).

Over residues 1 to 19 the composition is skewed to polar residues; that stretch reads MGLCGSKTQPMPSQTTTVA. The tract at residues 1–140 is disordered; the sequence is MGLCGSKTQP…ERERENMIYD (140 aa). G2 carries the N-myristoyl glycine lipid modification. C4 is lipidated: S-palmitoyl cysteine. The segment covering 27-40 has biased composition (basic and acidic residues); the sequence is INRDTVKSKQELRH. The span at 41 to 51 shows a compositional bias: basic residues; it reads KEKKDKKKKTQ. Over residues 73 to 140 the composition is skewed to basic and acidic residues; that stretch reads DPSKNKVSPK…ERERENMIYD (68 aa).

It to S.pombe new13. In terms of processing, myristoylated. The N-myristoylated protein is further palmitoylated by ERF2, PFA4 and slightly by PFA5, but not by PFA3.

It localises to the cytoplasm. The protein localises to the cytosol. This is an uncharacterized protein from Saccharomyces cerevisiae (strain ATCC 204508 / S288c) (Baker's yeast).